We begin with the raw amino-acid sequence, 491 residues long: 2-aminomuconic 6-semialdehyde dehydrogenase (491 aa).

Catalysis depends on residues Glu252 and Cys286.

It belongs to the aldehyde dehydrogenase family. As to quaternary structure, homotrimer.

The enzyme catalyses 2-aminomuconate 6-semialdehyde + NAD(+) + H2O = (2Z,4E)-2-aminomuconate + NADH + 2 H(+). Its activity is regulated as follows. Strongly inhibited by Ag(+) and Hg(+), and comnpletely inhibited by p-chloromercuribenzoic acid. Involved in the modified meta-cleavage pathway for 2-aminophenol catabolism. The enzyme is also active toward 2-hydroxymuconic 6-semialdehyde, acetaldehyde, propionaldehyde, and butyraldehyde. This Pseudomonas sp protein is 2-aminomuconic 6-semialdehyde dehydrogenase (amnC).